A 79-amino-acid chain; its full sequence is Delta-hormotoxin-Cpt1b (79 aa).

The signal sequence occupies residues 1–20 (MKTQVLALFVLCVLFCLAES). Residues 21–31 (RTTLNKRNDIE) constitute a propeptide that is removed on maturation. 3 disulfide bridges follow: cysteine 36–cysteine 75, cysteine 38–cysteine 66, and cysteine 56–cysteine 76.

The protein belongs to the sea anemone sodium channel inhibitory toxin family.

The protein localises to the secreted. The protein resides in the nematocyst. Its function is as follows. In neuromuscular preparation of crustaceans, the toxin increased neurotransmitter release, causing repetitive firing of the axons. May affect sodium channels (Nav). This chain is Delta-hormotoxin-Cpt1b, found in Calliactis parasitica (Sea anemone).